A 142-amino-acid chain; its full sequence is MSYTHILVAVAVTPESHQLLAKAVSIARPVQAKVSLITLASDPELYNQFAAPMMEDLRAVMHEETENFLKMLGEKADYPIEQTFIASGELSQHILAVCRKHHVDLVICGNHNHSFFSRASCSAKSVVSASQVDVLLVPLAGD.

Belongs to the universal stress protein A family.

Its subcellular location is the cytoplasm. In terms of biological role, required for resistance to DNA-damaging agents. In Salmonella typhimurium (strain LT2 / SGSC1412 / ATCC 700720), this protein is Universal stress protein C (uspC).